The following is a 139-amino-acid chain: Large ribosomal subunit protein bL17 (139 aa).

It belongs to the bacterial ribosomal protein bL17 family. Part of the 50S ribosomal subunit. Contacts protein L32.

The protein is Large ribosomal subunit protein bL17 of Cereibacter sphaeroides (strain ATCC 17025 / ATH 2.4.3) (Rhodobacter sphaeroides).